The sequence spans 83 residues: CLAVATA3/ESR (CLE)-related protein 20 (83 aa).

The first 29 residues, 1–29 (MKNKNMNPSRPRLLCLIVFLFLVIVLSKA), serve as a signal peptide directing secretion.

The protein belongs to the CLV3/ESR signal peptide family. In terms of tissue distribution, mostly expressed in roots, seedlings, leaves, flowers, stems and apex, and, to a lower extent, in siliques and pollen.

The protein localises to the secreted. Its subcellular location is the extracellular space. Functionally, extracellular signal peptide that regulates cell fate. Represses root apical meristem maintenance. Inhibits irreversibly root growth by reducing cell division rates in the root apical meristem. Regulates the transition of protophloem cells from proliferation to differentiation, thus impinging on postembryonic growth capacity of the root meristem; this signaling pathway requires CRN and CLV2. The protein is CLAVATA3/ESR (CLE)-related protein 20 of Arabidopsis thaliana (Mouse-ear cress).